We begin with the raw amino-acid sequence, 538 residues long: Non-specific phospholipase C4 (538 aa).

The disordered stretch occupies residues 91 to 112 (KPWDSGKPDPNPGHPNMSGFAQ).

It belongs to the bacterial phospholipase C family. Expressed in root tips, cotyledons, on leaf margins, stems, young anthers and funiculus.

The protein localises to the cell membrane. It carries out the reaction a 1,2-diacyl-sn-glycero-3-phosphocholine + H2O = phosphocholine + a 1,2-diacyl-sn-glycerol + H(+). Its function is as follows. Non-specific phospholipase C (PLC) which assumes major PLC activity during inorganic phosphate starvation. Substrate preference is phosphatidylcholine (PC), but can also hydrolyze phosphatidylethanolamine (PE) with lower efficiency. Has no activity toward phosphatidic acid (PA). Plays an important role in the supply of both inorganic phosphate and diacylglycerol from membrane-localized phospholipids during phosphate deprivation. May be required for lipid-derived signaling molecules that positively modulate abscisic acid (ABA) response and promote plant tolerance to drought and salt stresses. May be involved in brassinolide-mediated signaling in root development. This chain is Non-specific phospholipase C4 (NPC4), found in Arabidopsis thaliana (Mouse-ear cress).